We begin with the raw amino-acid sequence, 77 residues long: MEVKVFRVKGVFERLGKKQPFTKEYRALKQEHVKELVYSEIGSKHRVPRTKIWIESIEEIKPEEAEDPIVRKLSLEL.

It belongs to the eukaryotic ribosomal protein eL20 family. Part of the 50S ribosomal subunit. Binds 23S rRNA.

The polypeptide is Large ribosomal subunit protein eL20 (Thermococcus onnurineus (strain NA1)).